The sequence spans 210 residues: Methylthioribulose-1-phosphate dehydratase (210 aa).

The Zn(2+) site is built by H94 and H96.

This sequence belongs to the aldolase class II family. MtnB subfamily. Zn(2+) serves as cofactor.

The catalysed reaction is 5-(methylsulfanyl)-D-ribulose 1-phosphate = 5-methylsulfanyl-2,3-dioxopentyl phosphate + H2O. The protein operates within amino-acid biosynthesis; L-methionine biosynthesis via salvage pathway; L-methionine from S-methyl-5-thio-alpha-D-ribose 1-phosphate: step 2/6. In terms of biological role, catalyzes the dehydration of methylthioribulose-1-phosphate (MTRu-1-P) into 2,3-diketo-5-methylthiopentyl-1-phosphate (DK-MTP-1-P). In Yersinia enterocolitica serotype O:8 / biotype 1B (strain NCTC 13174 / 8081), this protein is Methylthioribulose-1-phosphate dehydratase.